The primary structure comprises 231 residues: uncharacterized protein (231 aa).

A Response regulatory domain is found at 4 to 116; sequence RILVVEDDED…ELHARVIAQL (113 aa). A 4-aspartylphosphate modification is found at Asp-52. Residues 129 to 230 constitute a DNA-binding region (ompR/PhoB-type); the sequence is EETFLIGGKL…EWGRGYRFGA (102 aa).

In terms of processing, phosphorylated by YrkQ.

It localises to the cytoplasm. Functionally, member of the two-component regulatory system YrkQ/YrkP. This is an uncharacterized protein from Bacillus subtilis (strain 168).